The sequence spans 330 residues: Tryptophan--tRNA ligase (330 aa).

ATP is bound by residues 10-12 and 18-19; these read QTT and GN. The short motif at 11-19 is the 'HIGH' region element; the sequence is TTGALHLGN. Asp134 is a binding site for L-tryptophan. Residues 146–148, Ile186, and 195–199 each bind ATP; these read GED and KMSKS. Residues 195 to 199 carry the 'KMSKS' region motif; it reads KMSKS.

This sequence belongs to the class-I aminoacyl-tRNA synthetase family. Homodimer.

It is found in the cytoplasm. It carries out the reaction tRNA(Trp) + L-tryptophan + ATP = L-tryptophyl-tRNA(Trp) + AMP + diphosphate + H(+). Functionally, catalyzes the attachment of tryptophan to tRNA(Trp). This Rickettsia typhi (strain ATCC VR-144 / Wilmington) protein is Tryptophan--tRNA ligase.